The chain runs to 207 residues: Ribosomal RNA large subunit methyltransferase E (207 aa).

Residues G60, W62, D80, D96, and D121 each contribute to the S-adenosyl-L-methionine site. Catalysis depends on K161, which acts as the Proton acceptor.

It belongs to the class I-like SAM-binding methyltransferase superfamily. RNA methyltransferase RlmE family.

It localises to the cytoplasm. The catalysed reaction is uridine(2552) in 23S rRNA + S-adenosyl-L-methionine = 2'-O-methyluridine(2552) in 23S rRNA + S-adenosyl-L-homocysteine + H(+). Functionally, specifically methylates the uridine in position 2552 of 23S rRNA at the 2'-O position of the ribose in the fully assembled 50S ribosomal subunit. The sequence is that of Ribosomal RNA large subunit methyltransferase E from Methylobacillus flagellatus (strain ATCC 51484 / DSM 6875 / VKM B-1610 / KT).